A 76-amino-acid chain; its full sequence is Signal recognition particle 9 kDa protein (76 aa).

Belongs to the SRP9 family. As to quaternary structure, heterodimer with SRP14; binds RNA as heterodimer. Component of a signal recognition particle complex that consists of a 7SL RNA molecule of 300 nucleotides and six protein subunits: srpa-72, srpa-68, SRP54, F37F2.2/SRP19, F25G6.8/SRP14 and ZK512.4/SRP9.

The protein localises to the cytoplasm. Functionally, component of the signal recognition particle (SRP) complex, a ribonucleoprotein complex that mediates the cotranslational targeting of secretory and membrane proteins to the endoplasmic reticulum (ER). SRP9 together with SRP14 and the Alu portion of the SRP RNA, constitutes the elongation arrest domain of SRP. The complex of SRP9 and SRP14 is required for SRP RNA binding. The chain is Signal recognition particle 9 kDa protein from Caenorhabditis elegans.